We begin with the raw amino-acid sequence, 141 residues long: NADH dehydrogenase [ubiquinone] 1 alpha subcomplex subunit 11 (141 aa).

Ala-2 carries the N-acetylalanine modification. Helical transmembrane passes span 22 to 43 (TYAT…SVAL) and 58 to 80 (RYTF…SAQV).

As to quaternary structure, complex I is composed of 45 different subunits.

The protein resides in the mitochondrion inner membrane. Accessory subunit of the mitochondrial membrane respiratory chain NADH dehydrogenase (Complex I), that is believed not to be involved in catalysis. Complex I functions in the transfer of electrons from NADH to the respiratory chain. The immediate electron acceptor for the enzyme is believed to be ubiquinone. The polypeptide is NADH dehydrogenase [ubiquinone] 1 alpha subcomplex subunit 11 (NDUFA11) (Bos taurus (Bovine)).